Here is a 155-residue protein sequence, read N- to C-terminus: MKLLIVAVGQRVPDWAQTAYDDYAKRFPPELKVELKAVKTEPRGSKTLETLYAAERERIEAAIPRGTRVVVLDERGTSLTTKALAQRLKDWQLGGDDVALVIGGPDGLEPAFRQAAHERIRLSDLTLPHAMVRVLLIEQLYRAWSVNAGHPYHRE.

Residues L72, G103, and 122–127 (LSDLTL) contribute to the S-adenosyl-L-methionine site.

Belongs to the RNA methyltransferase RlmH family. As to quaternary structure, homodimer.

The protein resides in the cytoplasm. It catalyses the reaction pseudouridine(1915) in 23S rRNA + S-adenosyl-L-methionine = N(3)-methylpseudouridine(1915) in 23S rRNA + S-adenosyl-L-homocysteine + H(+). In terms of biological role, specifically methylates the pseudouridine at position 1915 (m3Psi1915) in 23S rRNA. The polypeptide is Ribosomal RNA large subunit methyltransferase H (Acidovorax ebreus (strain TPSY) (Diaphorobacter sp. (strain TPSY))).